The following is an 83-amino-acid chain: Salivary thrombin inhibitor anophelin (83 aa).

The first 22 residues, 1–22, serve as a signal peptide directing secretion; that stretch reads MANKLVLISLLCVVLVAKITQA. The disordered stretch occupies residues 25-51; it reads QYAPGDEPSYDEDTDDSDKLVENDTSI. Asparagine 47 carries an N-linked (GlcNAc...) asparagine glycan. The interval 54–83 is sufficient for host thrombin inhibition; it reads EDYAAIEASLSETFNTAADPGRRLGEGSKP. The interval 56 to 62 is blocks exosite I of host thrombin; it reads YAAIEAS. The segment at 64-83 is disordered; sequence SETFNTAADPGRRLGEGSKP. Residues 72–75 form a blocks active site cleft of host thrombin in a reverse direction compared to substrates region; it reads DPGR. Over residues 73–83 the composition is skewed to basic and acidic residues; sequence PGRRLGEGSKP.

Belongs to the anophelin family. In terms of assembly, interacts with human F2 (thrombin); the interaction results in thrombin inhibition. In terms of tissue distribution, salivary gland (at protein level).

It localises to the secreted. Its activity is regulated as follows. Increasing concentration of NaCl decreases affinity for thrombin. Functionally, salivary protein with anticoagulant activity that inhibits host thrombin (F2); binds to the proteinase in a reverse orientation (opposite to substrates). Inhibits thrombin-induced platelet aggregation. The polypeptide is Salivary thrombin inhibitor anophelin (Anopheles albimanus (New world malaria mosquito)).